The chain runs to 207 residues: Transcriptional regulator GfcR (207 aa).

This sequence belongs to the purine/pyrimidine phosphoribosyltransferase family. GfcR subfamily.

The sequence is that of Transcriptional regulator GfcR from Methanocella arvoryzae (strain DSM 22066 / NBRC 105507 / MRE50).